An 89-amino-acid chain; its full sequence is Small ribosomal subunit protein uS15 (89 aa).

Belongs to the universal ribosomal protein uS15 family. As to quaternary structure, part of the 30S ribosomal subunit. Forms a bridge to the 50S subunit in the 70S ribosome, contacting the 23S rRNA.

Functionally, one of the primary rRNA binding proteins, it binds directly to 16S rRNA where it helps nucleate assembly of the platform of the 30S subunit by binding and bridging several RNA helices of the 16S rRNA. Its function is as follows. Forms an intersubunit bridge (bridge B4) with the 23S rRNA of the 50S subunit in the ribosome. This chain is Small ribosomal subunit protein uS15, found in Alcanivorax borkumensis (strain ATCC 700651 / DSM 11573 / NCIMB 13689 / SK2).